A 276-amino-acid chain; its full sequence is Diaminopimelate epimerase (276 aa).

The substrate site is built by Asn13, Gln46, and Asn66. The active-site Proton donor is Cys75. Substrate contacts are provided by residues 76–77 (GN), Asn159, Asn192, and 210–211 (ER). Residue Cys219 is the Proton acceptor of the active site. Position 220-221 (220-221 (GT)) interacts with substrate.

The protein belongs to the diaminopimelate epimerase family. As to quaternary structure, homodimer.

The protein resides in the cytoplasm. It catalyses the reaction (2S,6S)-2,6-diaminopimelate = meso-2,6-diaminopimelate. It participates in amino-acid biosynthesis; L-lysine biosynthesis via DAP pathway; DL-2,6-diaminopimelate from LL-2,6-diaminopimelate: step 1/1. In terms of biological role, catalyzes the stereoinversion of LL-2,6-diaminopimelate (L,L-DAP) to meso-diaminopimelate (meso-DAP), a precursor of L-lysine and an essential component of the bacterial peptidoglycan. This is Diaminopimelate epimerase from Pseudomonas aeruginosa (strain UCBPP-PA14).